Consider the following 102-residue polypeptide: MTEHNHDAELTINNEEELLTLYDENGNEVLYRKMLEFYHPEFKKEYVVLAEEGAQSDDEDMIELVPMINEPDESGDGGKLVPIETDEEWDMIEEVVNTEINE.

This sequence belongs to the UPF0473 family.

The chain is UPF0473 protein SERP1179 from Staphylococcus epidermidis (strain ATCC 35984 / DSM 28319 / BCRC 17069 / CCUG 31568 / BM 3577 / RP62A).